We begin with the raw amino-acid sequence, 474 residues long: Putative matrix metalloproteinase (474 aa).

Residues 1-17 (MIIYFAVITCSLKLCRS) form the signal peptide. Residue H189 participates in Zn(2+) binding. E190 is a catalytic residue. Residues H193 and H199 each coordinate Zn(2+). A Hemopexin repeat occupies 299-344 (AGVYDAISYVRGDLYVFVGDLHWRFDTSGMLHNGYPQPTGATWRLP).

This sequence belongs to the peptidase M10A family. Zn(2+) is required as a cofactor.

The sequence is that of Putative matrix metalloproteinase from Heliothis virescens ascovirus 3e (HvAV-3e).